We begin with the raw amino-acid sequence, 358 residues long: Methylthioribose-1-phosphate isomerase (358 aa).

Substrate-binding positions include 54 to 56 (RGA), Arg-96, and Gln-205. The active-site Proton donor is the Asp-246. 256–257 (NK) is a binding site for substrate.

This sequence belongs to the eIF-2B alpha/beta/delta subunits family. MtnA subfamily.

The enzyme catalyses 5-(methylsulfanyl)-alpha-D-ribose 1-phosphate = 5-(methylsulfanyl)-D-ribulose 1-phosphate. Its pathway is amino-acid biosynthesis; L-methionine biosynthesis via salvage pathway; L-methionine from S-methyl-5-thio-alpha-D-ribose 1-phosphate: step 1/6. Catalyzes the interconversion of methylthioribose-1-phosphate (MTR-1-P) into methylthioribulose-1-phosphate (MTRu-1-P). The polypeptide is Methylthioribose-1-phosphate isomerase (Azotobacter vinelandii (strain DJ / ATCC BAA-1303)).